A 285-amino-acid chain; its full sequence is Glutamate racemase (285 aa).

Substrate-binding positions include 28-29 (DS) and 60-61 (YG). The active-site Proton donor/acceptor is C92. Residue 93 to 94 (NT) participates in substrate binding. C204 functions as the Proton donor/acceptor in the catalytic mechanism. 205 to 206 (TH) contacts substrate.

Belongs to the aspartate/glutamate racemases family.

The enzyme catalyses L-glutamate = D-glutamate. It functions in the pathway cell wall biogenesis; peptidoglycan biosynthesis. Its function is as follows. Provides the (R)-glutamate required for cell wall biosynthesis. The sequence is that of Glutamate racemase from Shigella flexneri serotype 5b (strain 8401).